The sequence spans 377 residues: Killer cell immunoglobulin-like receptor 2DL4 (377 aa).

Positions 1–21 (MSMSPTVIILACLGFFLDQSV) are cleaved as a signal peptide. Topologically, residues 22–242 (WAHVGGQDKP…FKTGIARHLH (221 aa)) are extracellular. 2 Ig-like C2-type domains span residues 44–104 (GGHV…HPHS) and 139–202 (GENV…FHGS). A disulfide bond links cysteine 51 and cysteine 97. 2 N-linked (GlcNAc...) asparagine glycosylation sites follow: asparagine 141 and asparagine 175. Residues cysteine 146 and cysteine 195 are joined by a disulfide bond. The helical transmembrane segment at 243-263 (AVIRYSVAIILFTILPFFLLH) threads the bilayer. Over 264-377 (RWCSKKKDAA…ASSNVPAAGI (114 aa)) the chain is Cytoplasmic. A disordered region spans residues 338 to 377 (PRALSPAHEHHSQALMGSSRETTALSQTQLASSNVPAAGI). Residues 352–377 (LMGSSRETTALSQTQLASSNVPAAGI) show a composition bias toward polar residues.

The protein belongs to the immunoglobulin superfamily. In terms of assembly, interacts with peptide-bound HLA-G-B2M heterotrimeric complex. Interacts with ARRB2. As to expression, expressed in decidual NK cells and innate lymphoid cell type I (ILC1). Expressed in a subset of peripheral NK cells.

The protein resides in the cell membrane. Its subcellular location is the early endosome membrane. Its function is as follows. Receptor for non-classical major histocompatibility class Ib HLA-G molecules. Recognizes HLA-G in complex with B2M/beta-2 microglobulin and a nonamer self-peptide (peptide-bound HLA-G-B2M). In decidual NK cells, binds peptide-bound HLA-G-B2M complex and triggers NK cell senescence-associated secretory phenotype as a molecular switch to promote vascular remodeling and fetal growth in early pregnancy. May play a role in balancing tolerance and antiviral-immunity at maternal-fetal interface by keeping in check the effector functions of NK, CD8+ T cells and B cells. Upon interaction with peptide-bound HLA-G-B2M, initiates signaling from the endosomal compartment leading to downstream activation of PRKDC-XRCC5 and AKT1, and ultimately triggering NF-kappa-B-dependent pro-inflammatory response. The protein is Killer cell immunoglobulin-like receptor 2DL4 of Homo sapiens (Human).